The following is a 720-amino-acid chain: MRHANGRRGDTTIDIGKPVNFTGGLEFSNLTYTVIKKIKDSDGKWLNQEVDLLHQITGYAPKGCVTAVMGPSGAGKSTFLDGLAGRISSLRGRVSVDGMDMTPSFIKRTSAYIMQDDRLFPMLTVYETLLFAADLRLGPISMTDKRQRVEKLIEQLGLSSARNTYIGDEGTRGVSGGERRRVSIGVDIIHGPSLLFLDEPTSGLDSTSAHSVIDKVHAIARAGSTVILTIHQPSSRIQLLLDHLIILARGQLMYQGSPKDVSLHLGRMGRKVPKGESSIENLIDVIQEYDQSELGVEALAAFALTGMKPPPLGAHEMSIVPPSPAPSHREGRGHDRSNKRLHLKDQDFDHSLRSNWNTSKSWSASHSGVLQTLGFSPARHHRDHRNQNSVSSSLGDYAYTSENFRSIPTPHTQSSECTLNENDFMTPYAAANTNAYQYLGPKFANSFLSETWILMRRNFINIRRTPELFLSRLVVLTVMGIMMATMFMHPKKNLQGITNRLSFFIFTVCLFFFSSNDAVPAFIQERFIFVRETSHNKYRASSYTIAGLITYLPFLAVQAAVYAVIVWFALSLRGPFIYFLIVLYMSLLSTNSFVVFVSSVVPNYILGYAAVIAFTALFFLFCGYFLNSHDMPQYWKWMNYISTMTYPYEGLLMNQFQTSQTFGIDPLGRSITGNGILKSLNISQVESKKWEKVYIMLAWAIVYRILFYIVLRFFSKNQRT.

Over 1–467 (MRHANGRRGD…NFINIRRTPE (467 aa)) the chain is Cytoplasmic. The ABC transporter domain maps to 25–274 (LEFSNLTYTV…LGRMGRKVPK (250 aa)). ATP is bound at residue 70–77 (GPSGAGKS). Positions 313–346 (GAHEMSIVPPSPAPSHREGRGHDRSNKRLHLKDQ) are disordered. Residues 327–346 (SHREGRGHDRSNKRLHLKDQ) show a composition bias toward basic and acidic residues. Residues 468 to 488 (LFLSRLVVLTVMGIMMATMFM) traverse the membrane as a helical segment. Topologically, residues 489–502 (HPKKNLQGITNRLS) are extracellular. Residues 503–523 (FFIFTVCLFFFSSNDAVPAFI) traverse the membrane as a helical segment. Residues 524-547 (QERFIFVRETSHNKYRASSYTIAG) lie on the Cytoplasmic side of the membrane. The chain crosses the membrane as a helical span at residues 548 to 568 (LITYLPFLAVQAAVYAVIVWF). Residues 569–575 (ALSLRGP) lie on the Extracellular side of the membrane. The chain crosses the membrane as a helical span at residues 576 to 596 (FIYFLIVLYMSLLSTNSFVVF). Topologically, residues 597-604 (VSSVVPNY) are cytoplasmic. Residues 605 to 625 (ILGYAAVIAFTALFFLFCGYF) form a helical membrane-spanning segment. Topologically, residues 626–693 (LNSHDMPQYW…QVESKKWEKV (68 aa)) are extracellular. N681 carries N-linked (GlcNAc...) asparagine glycosylation. Residues 694–714 (YIMLAWAIVYRILFYIVLRFF) form a helical membrane-spanning segment. Residues 715 to 720 (SKNQRT) are Cytoplasmic-facing.

It belongs to the ABC transporter superfamily. ABCG family. Stunted arbuscule (STR) subfamily. In terms of assembly, heterodimerizes with STR; the resulting transporter is located in the peri-arbuscular membrane.

The protein localises to the cell membrane. Functionally, together with STR, required for arbuscule development in arbuscular mycorrhizal (AM) symbiosis. The protein is ABC transporter G family member STR2 of Petunia hybrida (Petunia).